Reading from the N-terminus, the 203-residue chain is Secreted phosphoprotein 24 (203 aa).

The signal sequence occupies residues 1–23 (MEQAMLKTLALLVLGMHYWCATG). Intrachain disulfides connect Cys86–Cys96 and Cys109–Cys127. Position 90 is a phosphoserine (Ser90). 5 positions are modified to phosphoserine: Ser137, Ser138, Ser162, Ser165, and Ser174.

It belongs to the SPP2 family. In terms of processing, phosphorylation sites are present in the extracellular medium.

Its subcellular location is the secreted. In terms of biological role, could coordinate an aspect of bone turnover. The polypeptide is Secreted phosphoprotein 24 (Spp2) (Mus musculus (Mouse)).